The sequence spans 298 residues: MQLEKMITEGSNAASAEIDRVSTLEMCRIINDEDKTVPLAVERVLPDIAAAIDVIHAQVSGGGRLIYLGAGTSGRLGILDASECPPTYGVKPGLVVGLIAGGEYAIQHAVEGAEDSREGGVNDLKNIGLTAQDVVVGIAASGRTPYVIAGLEYARQLGCRTVGISCNPGSAVSTTAEFAITPVVGAEVVTGSSRMKAGTAQKLVLNMLSTGLMIKSGKVFGNLMVDVVATNEKLHVRQVNIVKNATGCSAEQAEAALVACERNCKTAIVMVLKNLDAAEAKKRLDQHGGFIRQVLDKE.

The SIS domain maps to 55–218 (IHAQVSGGGR…STGLMIKSGK (164 aa)). The active-site Proton donor is E83. Residue E114 is part of the active site.

It belongs to the GCKR-like family. MurNAc-6-P etherase subfamily. As to quaternary structure, homodimer.

It carries out the reaction N-acetyl-D-muramate 6-phosphate + H2O = N-acetyl-D-glucosamine 6-phosphate + (R)-lactate. It participates in amino-sugar metabolism; 1,6-anhydro-N-acetylmuramate degradation. The protein operates within amino-sugar metabolism; N-acetylmuramate degradation. It functions in the pathway cell wall biogenesis; peptidoglycan recycling. Specifically catalyzes the cleavage of the D-lactyl ether substituent of MurNAc 6-phosphate, producing GlcNAc 6-phosphate and D-lactate. Together with AnmK, is also required for the utilization of anhydro-N-acetylmuramic acid (anhMurNAc) either imported from the medium or derived from its own cell wall murein, and thus plays a role in cell wall recycling. This is N-acetylmuramic acid 6-phosphate etherase from Escherichia coli O17:K52:H18 (strain UMN026 / ExPEC).